The primary structure comprises 277 residues: 4-hydroxy-tetrahydrodipicolinate reductase (277 aa).

NAD(+) contacts are provided by residues glycine 11 to methionine 16 and glycine 110 to threonine 112. Residue histidine 166 is the Proton donor/acceptor of the active site. Histidine 167 contributes to the (S)-2,3,4,5-tetrahydrodipicolinate binding site. The Proton donor role is filled by lysine 170. Glycine 176–threonine 177 serves as a coordination point for (S)-2,3,4,5-tetrahydrodipicolinate.

The protein belongs to the DapB family.

Its subcellular location is the cytoplasm. The enzyme catalyses (S)-2,3,4,5-tetrahydrodipicolinate + NAD(+) + H2O = (2S,4S)-4-hydroxy-2,3,4,5-tetrahydrodipicolinate + NADH + H(+). It carries out the reaction (S)-2,3,4,5-tetrahydrodipicolinate + NADP(+) + H2O = (2S,4S)-4-hydroxy-2,3,4,5-tetrahydrodipicolinate + NADPH + H(+). Its pathway is amino-acid biosynthesis; L-lysine biosynthesis via DAP pathway; (S)-tetrahydrodipicolinate from L-aspartate: step 4/4. Functionally, catalyzes the conversion of 4-hydroxy-tetrahydrodipicolinate (HTPA) to tetrahydrodipicolinate. The sequence is that of 4-hydroxy-tetrahydrodipicolinate reductase from Synechococcus sp. (strain CC9605).